The primary structure comprises 646 residues: NADP-dependent malic enzyme 4, chloroplastic (646 aa).

A chloroplast-targeting transit peptide spans 1–74 (MISLTPSLFL…LETSAADIVP (74 aa)). The active-site Proton donor is tyrosine 194. Arginine 247 contributes to the NADP(+) binding site. Lysine 265 acts as the Proton acceptor in catalysis. Positions 337, 338, and 361 each coordinate a divalent metal cation. NADP(+) contacts are provided by residues aspartate 361, 390–406 (LFLGAGEAGTGIAELIA), and asparagine 502.

Belongs to the malic enzymes family. In terms of assembly, homodimer and homotetramer. Requires Mg(2+) as cofactor. The cofactor is Mn(2+). In terms of tissue distribution, expressed in leaves, stems, flowers and roots, mainly in vascular system. In roots, present in the stele, including the vascular tissue and the pericycle, mainly at emerging lateral roots and at root tips.

The protein resides in the plastid. It localises to the chloroplast. It carries out the reaction (S)-malate + NADP(+) = pyruvate + CO2 + NADPH. The catalysed reaction is oxaloacetate + H(+) = pyruvate + CO2. It functions in the pathway photosynthesis; C3 acid pathway. Functionally, the chloroplastic ME isoform decarboxylates malate shuttled from neighboring mesophyll cells. The CO(2) released is then refixed by ribulose-bisphosphate carboxylase. This pathway eliminates the photorespiratory loss of CO(2) that occurs in most plants. The polypeptide is NADP-dependent malic enzyme 4, chloroplastic (NADP-ME4) (Arabidopsis thaliana (Mouse-ear cress)).